We begin with the raw amino-acid sequence, 203 residues long: Small ribosomal subunit protein uS4 (203 aa).

Positions 93-156 constitute an S4 RNA-binding domain; the sequence is RRLDNVVYRL…LKVPAILEAV (64 aa).

The protein belongs to the universal ribosomal protein uS4 family. Part of the 30S ribosomal subunit. Contacts protein S5. The interaction surface between S4 and S5 is involved in control of translational fidelity.

Its function is as follows. One of the primary rRNA binding proteins, it binds directly to 16S rRNA where it nucleates assembly of the body of the 30S subunit. In terms of biological role, with S5 and S12 plays an important role in translational accuracy. The sequence is that of Small ribosomal subunit protein uS4 from Streptococcus gordonii (strain Challis / ATCC 35105 / BCRC 15272 / CH1 / DL1 / V288).